The primary structure comprises 78 residues: Large ribosomal subunit protein bL28 (78 aa).

Residues Met1–His20 are disordered.

It belongs to the bacterial ribosomal protein bL28 family.

This Pseudomonas fluorescens (strain ATCC BAA-477 / NRRL B-23932 / Pf-5) protein is Large ribosomal subunit protein bL28.